The sequence spans 593 residues: Arylsulfatase D (593 aa).

The first 33 residues, 1 to 33 (MRSAARRGRAAPAARDSLPVLLFLCLLLKTCEP), serve as a signal peptide directing secretion. Residues Asp49 and Asp50 each coordinate Ca(2+). Residue Asn61 is glycosylated (N-linked (GlcNAc...) asparagine). Cys89 lines the Ca(2+) pocket. Cys89 functions as the Nucleophile in the catalytic mechanism. Cys89 bears the 3-oxoalanine (Cys) mark. A glycan (N-linked (GlcNAc...) asparagine) is linked at Asn128. Position 148 (Lys148) interacts with substrate. The active site involves His150. A substrate-binding site is contributed by His304. Asn347 carries N-linked (GlcNAc...) asparagine glycosylation. The Ca(2+) site is built by Asp356 and His357. Lys381 is a substrate binding site.

The protein belongs to the sulfatase family. It depends on Ca(2+) as a cofactor. The conversion to 3-oxoalanine (also known as C-formylglycine, FGly), of a serine or cysteine residue in prokaryotes and of a cysteine residue in eukaryotes, is critical for catalytic activity. In terms of tissue distribution, expressed in the pancreas, kidney, liver, lung, placenta, brain and heart.

It is found in the lysosome. This Homo sapiens (Human) protein is Arylsulfatase D (ARSD).